A 1068-amino-acid polypeptide reads, in one-letter code: Focal adhesion kinase 1 (1068 aa).

Residues 1-26 (MAAAYLDPNLNHNPSTNAKSRLSTGM) form a disordered region. Polar residues predominate over residues 10–23 (LNHNPSTNAKSRLS). The FERM domain maps to 35–355 (RVLRVFHYFE…GYCRLVSGAS (321 aa)). Phosphotyrosine occurs at positions 403 and 413. Residues 435-693 (IELGRCIGEG…ELKAQLSTIL (259 aa)) enclose the Protein kinase domain. ATP-binding positions include 441 to 447 (IGEGQFG), lysine 467, and 513 to 515 (ELC). Catalysis depends on aspartate 559, which acts as the Proton acceptor. A phosphotyrosine; by autocatalysis mark is found at tyrosine 589 and tyrosine 590. The segment covering 699 to 710 (QQEERMRMESRR) has biased composition (basic and acidic residues). Disordered regions lie at residues 699–750 (QQEE…QHMM) and 869–912 (GNQH…DGYN). 2 positions are modified to phosphotyrosine: tyrosine 874 and tyrosine 941.

Belongs to the protein kinase superfamily. Tyr protein kinase family. FAK subfamily. In terms of processing, phosphorylated on tyrosine residues; phosphorylated kinase is first detected during gastrulation, suggesting that tyrosine phosphorylation is developmentally regulated.

It is found in the cell junction. It localises to the focal adhesion. The protein localises to the cell membrane. Its subcellular location is the cytoplasm. The protein resides in the cytoskeleton. It is found in the cilium basal body. The enzyme catalyses L-tyrosyl-[protein] + ATP = O-phospho-L-tyrosyl-[protein] + ADP + H(+). Its function is as follows. Non-receptor protein-tyrosine kinase implicated in signaling pathways involved in cell motility, proliferation and apoptosis. Activated by tyrosine-phosphorylation in response to either integrin clustering induced by cell adhesion or antibody cross-linking, or via G-protein coupled receptor (GPCR) occupancy by ligands such as bombesin or lysophosphatidic acid, or via LDL receptor occupancy. Microtubule-induced dephosphorylation at Tyr-397 is crucial for the induction of focal adhesion disassembly. The polypeptide is Focal adhesion kinase 1 (ptk2) (Xenopus laevis (African clawed frog)).